The sequence spans 404 residues: uncharacterized protein (404 aa).

Positions Val-262–Ala-278 are enriched in polar residues. 2 disordered regions span residues Val-262–Leu-307 and Met-319–Asp-340. 3 positions are modified to phosphoserine: Ser-268, Ser-276, and Ser-279. 2 positions are modified to phosphothreonine: Thr-290 and Thr-293. Ser-304, Ser-306, Ser-324, Ser-358, and Ser-362 each carry phosphoserine. Residues Met-319–Asp-336 show a composition bias toward basic and acidic residues.

This is an uncharacterized protein from Mus musculus (Mouse).